The sequence spans 584 residues: uncharacterized protein (584 aa).

Disordered regions lie at residues 151-188, 222-243, 399-418, and 433-584; these read EHPP…DNDL, KRKE…SRAN, SETP…PPDF, and MQPS…AKSD. Basic and acidic residues predominate over residues 159-188; sequence TSSEKTRSENRERKKRWREQNEERNKDNDL. The span at 231–243 shows a compositional bias: low complexity; the sequence is LSQNQSSNASRAN. 5 stretches are compositionally biased toward polar residues: residues 399-409, 433-453, 483-500, 511-531, and 572-584; these read SETPTPVSGNG, MQPS…SSEM, NAVT…SGSP, NYSQ…SSLP, and QRSS…AKSD.

This is an uncharacterized protein from Schizosaccharomyces pombe (strain 972 / ATCC 24843) (Fission yeast).